The primary structure comprises 236 residues: UPF0502 protein Bcenmc03_4618 (236 aa).

This sequence belongs to the UPF0502 family.

In Burkholderia orbicola (strain MC0-3), this protein is UPF0502 protein Bcenmc03_4618.